A 130-amino-acid polypeptide reads, in one-letter code: uncharacterized protein (130 aa).

Positions 1 to 104 (MRPGSSPRAP…RGRWGLRGGP (104 aa)) are disordered. Residues 88–97 (RRQPGPQRGR) are compositionally biased toward low complexity.

This is an uncharacterized protein from Homo sapiens (Human).